Here is a 156-residue protein sequence, read N- to C-terminus: MEIWVNNDQEIVEFTEEHEELIRRVAERALELAGAGLGSNVSVSVTLVDDETITDLNRDHRGLASPTDVLSFSQLEGEDMGDLPEGEPMPLGDIVISLERCVSQAAEYGHSFERELGFLTAHGMLHLMGWDHQTPEDEARMMAKTEEILAGLGLSR.

Zn(2+) contacts are provided by His122, His126, and His132.

The protein belongs to the endoribonuclease YbeY family. Zn(2+) is required as a cofactor.

The protein resides in the cytoplasm. Functionally, single strand-specific metallo-endoribonuclease involved in late-stage 70S ribosome quality control and in maturation of the 3' terminus of the 16S rRNA. The sequence is that of Endoribonuclease YbeY from Symbiobacterium thermophilum (strain DSM 24528 / JCM 14929 / IAM 14863 / T).